The chain runs to 376 residues: Queuine tRNA-ribosyltransferase (376 aa).

The active-site Proton acceptor is the aspartate 93. Substrate-binding positions include 93 to 97, aspartate 147, glutamine 190, and glycine 217; that span reads DSGGF. The segment at 248 to 254 is RNA binding; sequence GVGKPDD. Catalysis depends on aspartate 267, which acts as the Nucleophile. Residues cysteine 305, cysteine 307, cysteine 310, and histidine 336 each contribute to the Zn(2+) site.

Belongs to the queuine tRNA-ribosyltransferase family. Homodimer. Within each dimer, one monomer is responsible for RNA recognition and catalysis, while the other monomer binds to the replacement base PreQ1. Zn(2+) is required as a cofactor.

It carries out the reaction 7-aminomethyl-7-carbaguanine + guanosine(34) in tRNA = 7-aminomethyl-7-carbaguanosine(34) in tRNA + guanine. The protein operates within tRNA modification; tRNA-queuosine biosynthesis. Functionally, catalyzes the base-exchange of a guanine (G) residue with the queuine precursor 7-aminomethyl-7-deazaguanine (PreQ1) at position 34 (anticodon wobble position) in tRNAs with GU(N) anticodons (tRNA-Asp, -Asn, -His and -Tyr). Catalysis occurs through a double-displacement mechanism. The nucleophile active site attacks the C1' of nucleotide 34 to detach the guanine base from the RNA, forming a covalent enzyme-RNA intermediate. The proton acceptor active site deprotonates the incoming PreQ1, allowing a nucleophilic attack on the C1' of the ribose to form the product. After dissociation, two additional enzymatic reactions on the tRNA convert PreQ1 to queuine (Q), resulting in the hypermodified nucleoside queuosine (7-(((4,5-cis-dihydroxy-2-cyclopenten-1-yl)amino)methyl)-7-deazaguanosine). This Ruegeria sp. (strain TM1040) (Silicibacter sp.) protein is Queuine tRNA-ribosyltransferase.